Here is a 314-residue protein sequence, read N- to C-terminus: MKKRAGIWAALLLAAVMLAGCGNPADQKDSKAKQKTEVFPVTIDDASNQDVTIKKEPKKIVSLMPSNTEITYALGLGDKVVGVTTNDTYPKEVKKVEKVGDMNVNVEKVISLKPDLVLAHESSMSASADAIKQLKDAGITVLTVNDAQSFSEVYKSIEMIGEAGGAEKKADQLVKSMKSDLKDIQEKAKTISKDEEKSVFIEVSPDPDIYTTGKDTFMNEMLNVIHAKNAAADQTGWVQMTDEAIVKLNPDAIVTTDGVKAKAVEKRDGWSEINAVKHHRVYDVDPDLVTRSGPRLIEGVEELAESIYPDTFKE.

The signal sequence occupies residues 1–20 (MKKRAGIWAALLLAAVMLAG). A lipid anchor (N-palmitoyl cysteine) is attached at Cys-21. Cys-21 is lipidated: S-diacylglycerol cysteine. The Fe/B12 periplasmic-binding domain occupies 59-311 (KIVSLMPSNT…ELAESIYPDT (253 aa)).

The protein belongs to the bacterial solute-binding protein 8 family. The complex is composed of two ATP-binding proteins (YvrA), two transmembrane proteins (YvrB) and a solute-binding protein (YvrC).

It localises to the cell membrane. Functionally, probably part of an ABC transporter complex. This is an uncharacterized protein from Bacillus subtilis (strain 168).